A 403-amino-acid chain; its full sequence is MATSPAVIDVETIRKAQRAEGPATILAIGTATPANCVYQADYPDYYFRVTESEHMVDLKEKFQRMCDKSMIRKRYMHITEEFLKENPSMCKFMAPSLDARQDLVVVEVPKLGKEAATKAIKEWGFPKSKITHLVFCTTSGVDMPGADYQLTKLLGLRPSVKRLMMYQQGCFAGGTVLRLAKDLAENNKGARVLVVCSEITAVTFRGPNEGHLDSLVGQALFGDGAAAVIIGSDPDLSVERPLFEMVSAAQTILPDSEGAIDGHLKEVGLTFHLLKDVPALIAKNIEKALIQAFSPLNINDWNSIFWIAHPGGPAILDQVEFKLGLREEKLRASRHVLSEYGNMSSACVLFILDEMRKKSIKDGKTTTGEGLEWGVLFGFGPGLTVETVVLHSLPATISVATQN.

Residue C170 is part of the active site.

This sequence belongs to the thiolase-like superfamily. Chalcone/stilbene synthases family.

The catalysed reaction is (E)-4-coumaroyl-CoA + 3 malonyl-CoA + 3 H(+) = 2',4,4',6'-tetrahydroxychalcone + 3 CO2 + 4 CoA. The protein operates within secondary metabolite biosynthesis; flavonoid biosynthesis. Its function is as follows. The primary product of this enzyme is 4,2',4',6'-tetrahydroxychalcone (also termed naringenin-chalcone or chalcone) which can under specific conditions spontaneously isomerize into naringenin. The sequence is that of Chalcone synthase 3 (CHS3) from Gerbera hybrida (Daisy).